Consider the following 557-residue polypeptide: Probable phenylalanine--tRNA ligase beta subunit (557 aa).

Residues 276–352 (MHNRSYVMGL…IAHGFNNFRR (77 aa)) enclose the B5 domain. The Mg(2+) site is built by Asp-330, Asp-336, Glu-339, and Asp-340.

The protein belongs to the phenylalanyl-tRNA synthetase beta subunit family. Type 2 subfamily. As to quaternary structure, tetramer of two alpha and two beta subunits. Mg(2+) serves as cofactor.

It localises to the cytoplasm. It catalyses the reaction tRNA(Phe) + L-phenylalanine + ATP = L-phenylalanyl-tRNA(Phe) + AMP + diphosphate + H(+). This is Probable phenylalanine--tRNA ligase beta subunit from Encephalitozoon cuniculi (strain GB-M1) (Microsporidian parasite).